A 118-amino-acid polypeptide reads, in one-letter code: Non-specific lipid-transfer protein 1 (118 aa).

The N-terminal stretch at 1 to 25 (MASLRVSCLVALMCMVVISAPMAEA) is a signal peptide. 4 disulfide bridges follow: C29/C76, C39/C53, C54/C99, and C74/C113.

It belongs to the plant LTP family.

Plant non-specific lipid-transfer proteins transfer phospholipids as well as galactolipids across membranes. May play a role in wax or cutin deposition in the cell walls of expanding epidermal cells and certain secretory tissues. The protein is Non-specific lipid-transfer protein 1 of Lens culinaris (Lentil).